Here is a 1451-residue protein sequence, read N- to C-terminus: Fanconi anemia group D2 protein (1451 aa).

The disordered stretch occupies residues 1–37 (MVSKRRLSKSEDKESLTEDASKTRKQPLSKKTKKSHI). The tract at residues 1–291 (MVSKRRLSKS…IKFILHSVTA (291 aa)) is interaction with FANCE. At Ser-8 the chain carries Phosphoserine. The segment covering 8 to 22 (SKSEDKESLTEDASK) has biased composition (basic and acidic residues). The span at 23-36 (TRKQPLSKKTKKSH) shows a compositional bias: basic residues. At Ser-222 the chain carries Phosphoserine; by ATM. Positions 248–359 (VLSSLRLDPN…IKSAIRYEKT (112 aa)) are interaction with BRCA2. Lys-561 is covalently cross-linked (Glycyl lysine isopeptide (Lys-Gly) (interchain with G-Cter in ubiquitin)). Residues Ser-592, Ser-594, and Ser-717 each carry the phosphoserine modification. Positions 868–906 (IERKQKTDGSKTSSSDTLSEEKNSECDPTPSHRGQLNKE) are disordered. Phosphoserine is present on Ser-1257. Positions 1396 to 1451 (GEEIKSQNSQESTADESEDDMSSQASKSKATEDGEEDEVSAGEKEQDSDESYDDSD) are disordered. Phosphoserine; by ATM is present on residues Ser-1401 and Ser-1404. 2 positions are modified to phosphoserine: Ser-1412 and Ser-1423. Thr-1426 carries the post-translational modification Phosphothreonine. A compositionally biased stretch (acidic residues) spans 1428 to 1451 (DGEEDEVSAGEKEQDSDESYDDSD). Ser-1435 carries the phosphoserine modification.

It belongs to the Fanconi anemia protein FANCD2 family. As to quaternary structure, homodimer; cannot be ubiquitinated and does not bind DNA. Part of a FANCI-FANCD2 heterodimeric complex that binds and scans dsDNA for DNA damage. Interacts directly with FANCE and FANCI. Interacts with USP1 and MEN1. The ubiquitinated form specifically interacts with BRCA1 and BLM. Both the nonubiquitinated and the monoubiquitinated forms interact with BRCA2; this interaction is mediated by phosphorylated FANCG and the complex also includes XCCR3. The ubiquitinated form specifically interacts with MTMR15/FAN1 (via UBZ-type zinc finger), leading to recruit MTMR15/FAN1 to sites of DNA damage. Interacts with DCLRE1B/Apollo. Interacts with POLN. Interacts with UHRF1 and UHRF2; these interactions promote FANCD2 activation. In terms of processing, monoubiquitinated on Lys-561 during S phase and upon genotoxic stress by FANCL in complex with E2 ligases UBE2T or UBE2W (isoform 1 and isoform 2). Deubiquitinated by USP1 as cells enter G2/M, or once DNA repair is completed. Monoubiquitination requires the joint intervention of the FANC core complex, including FANCA, FANCB, FANCC, FANCE, FANCF, FANCG, and FANCM, and proteins involved in cell cycle checkpoints and DNA repair, including RPA1, ATR, CHEK1 and BRCA1, and is mediated by FANCL/PHF9. Monoubiquitination prevents DNA release from the FANCI-FANCD2 complex. FANCD2 is only ubiquitinated in the FANCI-FANCD2 complex and the monoubiquitination of FANCD2 is promoted by phosphorylation of FANCI. Ubiquitination is required for binding to chromatin, interaction with BRCA1, BRCA2 and MTMR15/FAN1, DNA repair, and normal cell cycle progression, but not for phosphorylation on Ser-222 or interaction with MEN1. Post-translationally, phosphorylated in response to various genotoxic stresses by ATM and/or ATR. Upon ionizing radiation, phosphorylated by ATM on Ser-222 and Ser-1404. Phosphorylation on Ser-222 is required for S-phase checkpoint activation, but not for ubiquitination, foci formation, or DNA repair. In contrast, phosphorylation by ATR on other sites may be required for ubiquitination and foci formation. Highly expressed in germinal center cells of the spleen, tonsil, and reactive lymph nodes, and in the proliferating basal layer of squamous epithelium of tonsil, esophagus, oropharynx, larynx and cervix. Expressed in cytotrophoblastic cells of the placenta and exocrine cells of the pancreas (at protein level). Highly expressed in testis, where expression is restricted to maturing spermatocytes.

The protein localises to the nucleus. Functionally, required for maintenance of chromosomal stability. Promotes accurate and efficient pairing of homologs during meiosis. Involved in the repair of DNA double-strand breaks, both by homologous recombination and single-strand annealing. The FANCI-FANCD2 complex binds and scans double-stranded DNA (dsDNA) for DNA damage; this complex stalls at DNA junctions between double-stranded DNA and single-stranded DNA. May participate in S phase and G2 phase checkpoint activation upon DNA damage. Plays a role in preventing breakage and loss of missegregating chromatin at the end of cell division, particularly after replication stress. Required for the targeting, or stabilization, of BLM to non-centromeric abnormal structures induced by replicative stress. Promotes BRCA2/FANCD1 loading onto damaged chromatin. May also be involved in B-cell immunoglobulin isotype switching. The protein is Fanconi anemia group D2 protein (FANCD2) of Homo sapiens (Human).